We begin with the raw amino-acid sequence, 531 residues long: Apolipoprotein N-acyltransferase (531 aa).

A run of 7 helical transmembrane segments spans residues 8 to 28, 34 to 54, 74 to 94, 105 to 125, 128 to 148, 178 to 198, and 206 to 226; these read IILL…LLAM, FGIF…IDGV, WSFG…AFLV, LAVV…VLVA, LWSD…VAEW, VLNV…PALI, and VGLA…YYRL. Positions 243–493 constitute a CN hydrolase domain; that stretch reads VQPVIDQAKK…KGVTDAILPG (251 aa). The Proton acceptor role is filled by Glu287. The active site involves Lys351. Cys405 (nucleophile) is an active-site residue. A helical membrane pass occupies residues 501–521; the sequence is SMLRGRIFWFTGVFLLLVAAI.

It belongs to the CN hydrolase family. Apolipoprotein N-acyltransferase subfamily.

Its subcellular location is the cell inner membrane. It carries out the reaction N-terminal S-1,2-diacyl-sn-glyceryl-L-cysteinyl-[lipoprotein] + a glycerophospholipid = N-acyl-S-1,2-diacyl-sn-glyceryl-L-cysteinyl-[lipoprotein] + a 2-acyl-sn-glycero-3-phospholipid + H(+). Its pathway is protein modification; lipoprotein biosynthesis (N-acyl transfer). Catalyzes the phospholipid dependent N-acylation of the N-terminal cysteine of apolipoprotein, the last step in lipoprotein maturation. The sequence is that of Apolipoprotein N-acyltransferase from Sinorhizobium fredii (strain NBRC 101917 / NGR234).